The sequence spans 704 residues: Translin-associated factor X-interacting protein 1 (704 aa).

The disordered stretch occupies residues 1–37; sequence MANLQERKSFSKPRISIQASGGTPEAKGIEKRKLSQK. Coiled-coil stretches lie at residues 190 to 230 and 304 to 342; these read EISV…AEEY and RRDL…LQLH.

In terms of assembly, interacts with TSNAX. Specifically expressed in testes. Predominantly detected in the post-meiotic stages of germ cells.

It localises to the cytoplasm. The protein localises to the perinuclear region. Its function is as follows. Possible role in spermatogenesis. This is Translin-associated factor X-interacting protein 1 from Mus musculus (Mouse).